The sequence spans 218 residues: Glycerol-3-phosphate acyltransferase 2 (218 aa).

The next 5 helical transmembrane spans lie at 6-26 (YLLIFILAYLIGSFPTGVLVG), 50-70 (VMGPVAGSAVLVIDVLKGTLA), 85-105 (LLLIAGACAILGHTFSIFLKF), 115-135 (AGVFLGYNLKFFGLCALVFLP), and 159-179 (FWFHDIFLTIITGIMMILLFV).

This sequence belongs to the PlsY family. In terms of assembly, probably interacts with PlsX.

It localises to the cell membrane. The enzyme catalyses an acyl phosphate + sn-glycerol 3-phosphate = a 1-acyl-sn-glycero-3-phosphate + phosphate. The protein operates within lipid metabolism; phospholipid metabolism. Catalyzes the transfer of an acyl group from acyl-phosphate (acyl-PO(4)) to glycerol-3-phosphate (G3P) to form lysophosphatidic acid (LPA). This enzyme utilizes acyl-phosphate as fatty acyl donor, but not acyl-CoA or acyl-ACP. The sequence is that of Glycerol-3-phosphate acyltransferase 2 from Lactobacillus johnsonii (strain CNCM I-12250 / La1 / NCC 533).